The chain runs to 476 residues: Adenosylhomocysteinase (476 aa).

Residues threonine 67, aspartate 142, and glutamate 202 each contribute to the substrate site. 203–205 is an NAD(+) binding site; that stretch reads TTT. Substrate contacts are provided by lysine 232 and aspartate 236. Residues asparagine 237, 266 to 271, glutamate 289, asparagine 324, 345 to 347, and asparagine 390 each bind NAD(+); these read GYGDVG and IGH.

The protein belongs to the adenosylhomocysteinase family. NAD(+) serves as cofactor.

It localises to the cytoplasm. The catalysed reaction is S-adenosyl-L-homocysteine + H2O = L-homocysteine + adenosine. The protein operates within amino-acid biosynthesis; L-homocysteine biosynthesis; L-homocysteine from S-adenosyl-L-homocysteine: step 1/1. Its function is as follows. May play a key role in the regulation of the intracellular concentration of adenosylhomocysteine. The protein is Adenosylhomocysteinase of Synechococcus sp. (strain CC9605).